The primary structure comprises 142 residues: Transcriptional regulator MraZ (142 aa).

SpoVT-AbrB domains are found at residues 5-51 and 77-120; these read ASSL…PRNE and AMDV…DAAT.

Belongs to the MraZ family. Forms oligomers.

The protein resides in the cytoplasm. It is found in the nucleoid. This is Transcriptional regulator MraZ from Polaromonas sp. (strain JS666 / ATCC BAA-500).